The primary structure comprises 784 residues: DNA ligase (784 aa).

NAD(+)-binding positions include Asp35–Asp39, Ser84–Leu85, and Glu117. The N6-AMP-lysine intermediate role is filled by Lys119. NAD(+)-binding residues include Arg140, Glu177, Lys294, and Lys318. Zn(2+) contacts are provided by Cys412, Cys415, Cys442, and Cys448. In terms of domain architecture, BRCT spans Ala703–Ser784.

This sequence belongs to the NAD-dependent DNA ligase family. LigA subfamily. Requires Mg(2+) as cofactor. The cofactor is Mn(2+).

It carries out the reaction NAD(+) + (deoxyribonucleotide)n-3'-hydroxyl + 5'-phospho-(deoxyribonucleotide)m = (deoxyribonucleotide)n+m + AMP + beta-nicotinamide D-nucleotide.. In terms of biological role, DNA ligase that catalyzes the formation of phosphodiester linkages between 5'-phosphoryl and 3'-hydroxyl groups in double-stranded DNA using NAD as a coenzyme and as the energy source for the reaction. It is essential for DNA replication and repair of damaged DNA. The polypeptide is DNA ligase (Azotobacter vinelandii (strain DJ / ATCC BAA-1303)).